A 130-amino-acid polypeptide reads, in one-letter code: MNTDKKAVTKKKVKRNVPQGNCYIQAGFGNVIVTMTDPTGATVSWSSAGHLGFKGSRKGTPFAAQVAAEDAAKKAMEAGMKSVDVYLKGPGAGREPAIRALAATGMRILSLKDVTPVPHNGCRPPKRRRI.

This sequence belongs to the universal ribosomal protein uS11 family. As to quaternary structure, part of the 30S ribosomal subunit. Interacts with proteins S7 and S18. Binds to IF-3.

Functionally, located on the platform of the 30S subunit, it bridges several disparate RNA helices of the 16S rRNA. Forms part of the Shine-Dalgarno cleft in the 70S ribosome. This chain is Small ribosomal subunit protein uS11, found in Bdellovibrio bacteriovorus (strain ATCC 15356 / DSM 50701 / NCIMB 9529 / HD100).